Here is a 211-residue protein sequence, read N- to C-terminus: Large ribosomal subunit protein uL4 (211 aa).

The tract at residues 44-90 (ERQGTHSTLTKGEVRGGGKKPWRQKHTGKARTGSTRNPHWTGGGVVF) is disordered. Basic residues predominate over residues 60-72 (GGKKPWRQKHTGK).

It belongs to the universal ribosomal protein uL4 family. Part of the 50S ribosomal subunit.

One of the primary rRNA binding proteins, this protein initially binds near the 5'-end of the 23S rRNA. It is important during the early stages of 50S assembly. It makes multiple contacts with different domains of the 23S rRNA in the assembled 50S subunit and ribosome. Functionally, forms part of the polypeptide exit tunnel. This is Large ribosomal subunit protein uL4 from Ureaplasma parvum serovar 3 (strain ATCC 27815 / 27 / NCTC 11736).